We begin with the raw amino-acid sequence, 452 residues long: Tripartite motif-containing protein 49C (452 aa).

The RING-type zinc-finger motif lies at 15-56 (CPLCMNYFIDPVTIDCGHSFCRPCFYLNWQDIPFLVQCSECT). The segment at 88–129 (SEEQMCGTHRETKKIFCEVDRSLLCLLCSSSQEHRYHRHRPI) adopts a B box-type zinc-finger fold. Residues cysteine 93, histidine 96, cysteine 115, and histidine 121 each contribute to the Zn(2+) site. The B30.2/SPRY domain occupies 269–452 (ELSAGPITGL…LRPIFCCIHF (184 aa)).

In Homo sapiens (Human), this protein is Tripartite motif-containing protein 49C (TRIM49C).